Consider the following 311-residue polypeptide: MADVINVSVNLEAFSQAISAIQALRSSVSRVFDCLKDGMRNKETLEGREKAFIAHFQDNLHSVNRDLNELERLSNLVGKPSENHPLHNSGLLSLDPVQDKTPLYSQLLQAYKWSNKLQYHAGLASGLLNQQSLKRSANQMGVSAKRRPKAQPTTLVLPPQYVDDVISRIDRMFPEMSIHLSRPNGTSAMLLVTLGKVLKVIVVMRSLFIDRTIVKGYNENVYTEDGKLDIWSKSNYQVFQKVTDHATTALLHYQLPQMPDVVVRSFMTWLRSYIKLFQAPCQRCGKFLQDGLPPTWRDFRTLEAFHDTCRQ.

Ser-132 is subject to Phosphoserine. N6-methyllysine is present on Lys-134.

This sequence belongs to the Mediator complex subunit 27 family. Component of the Mediator complex, which is composed of MED1, MED4, MED6, MED7, MED8, MED9, MED10, MED11, MED12, MED13, MED13L, MED14, MED15, MED16, MED17, MED18, MED19, MED20, MED21, MED22, MED23, MED24, MED25, MED26, MED27, MED29, MED30, MED31, CCNC, CDK8 and CDC2L6/CDK11. The MED12, MED13, CCNC and CDK8 subunits form a distinct module termed the CDK8 module. Mediator containing the CDK8 module is less active than Mediator lacking this module in supporting transcriptional activation. Individual preparations of the Mediator complex lacking one or more distinct subunits have been variously termed ARC, CRSP, DRIP, PC2, SMCC and TRAP.

The protein resides in the nucleus. Functionally, component of the Mediator complex, a coactivator involved in the regulated transcription of nearly all RNA polymerase II-dependent genes. Mediator functions as a bridge to convey information from gene-specific regulatory proteins to the basal RNA polymerase II transcription machinery. Mediator is recruited to promoters by direct interactions with regulatory proteins and serves as a scaffold for the assembly of a functional preinitiation complex with RNA polymerase II and the general transcription factors. The polypeptide is Mediator of RNA polymerase II transcription subunit 27 (MED27) (Homo sapiens (Human)).